We begin with the raw amino-acid sequence, 93 residues long: Small ribosomal subunit protein uS19 (93 aa).

The protein belongs to the universal ribosomal protein uS19 family.

Functionally, protein S19 forms a complex with S13 that binds strongly to the 16S ribosomal RNA. The chain is Small ribosomal subunit protein uS19 from Ligilactobacillus salivarius (strain UCC118) (Lactobacillus salivarius).